Here is a 567-residue protein sequence, read N- to C-terminus: Urease subunit alpha (567 aa).

The region spanning 129–567 (GGIDSHIHFI…LPMAQRYFLF (439 aa)) is the Urease domain. The Ni(2+) site is built by H134, H136, and K217. N6-carboxylysine is present on K217. H219 serves as a coordination point for substrate. Residues H246 and H272 each coordinate Ni(2+). Residue H320 is the Proton donor of the active site. D360 serves as a coordination point for Ni(2+).

The protein belongs to the metallo-dependent hydrolases superfamily. Urease alpha subunit family. In terms of assembly, heterotrimer of UreA (gamma), UreB (beta) and UreC (alpha) subunits. Three heterotrimers associate to form the active enzyme. Ni cation is required as a cofactor. In terms of processing, carboxylation allows a single lysine to coordinate two nickel ions.

Its subcellular location is the cytoplasm. It carries out the reaction urea + 2 H2O + H(+) = hydrogencarbonate + 2 NH4(+). It functions in the pathway nitrogen metabolism; urea degradation; CO(2) and NH(3) from urea (urease route): step 1/1. The sequence is that of Urease subunit alpha from Tolumonas auensis (strain DSM 9187 / NBRC 110442 / TA 4).